We begin with the raw amino-acid sequence, 226 residues long: ATP synthase subunit a 1 (226 aa).

Transmembrane regions (helical) follow at residues 20–40, 78–98, 113–133, 174–194, and 196–216; these read LTIVTTWAVMLLLAGGSWLIT, YLPFIATLFLFIATANLCTVI, ALALSVFIAVPLFGIAESGLV, MILVILLTISPLVFPVLMNIL, and LLTGMVQAYIFSILATVYIAA.

The protein belongs to the ATPase A chain family. In terms of assembly, F-type ATPases have 2 components, CF(1) - the catalytic core - and CF(0) - the membrane proton channel. CF(1) has five subunits: alpha(3), beta(3), gamma(1), delta(1), epsilon(1). CF(0) has four main subunits: a, b, b' and c.

The protein localises to the cell inner membrane. In terms of biological role, key component of the proton channel; it plays a direct role in the translocation of protons across the membrane. This chain is ATP synthase subunit a 1, found in Chlorobaculum parvum (strain DSM 263 / NCIMB 8327) (Chlorobium vibrioforme subsp. thiosulfatophilum).